We begin with the raw amino-acid sequence, 219 residues long: Small ribosomal subunit protein uS3c (219 aa).

The 73-residue stretch at 39 to 111 (IRKFLMEKIK…NSFFNVKINF (73 aa)) folds into the KH type-2 domain.

The protein belongs to the universal ribosomal protein uS3 family. Part of the 30S ribosomal subunit.

It localises to the plastid. The protein is Small ribosomal subunit protein uS3c (rps3) of Euglena longa (Euglenophycean alga).